A 198-amino-acid chain; its full sequence is Cyclin-dependent kinase inhibitor 1B (198 aa).

The span at Met-1–Pro-11 shows a compositional bias: polar residues. The tract at residues Met-1–Gly-34 is disordered. Phosphoserine; by UHMK1 is present on Ser-10. The segment covering Glu-14–Lys-25 has biased composition (basic and acidic residues). The interval Asp-51–Pro-91 is interaction with CDK2. Position 74 is a phosphotyrosine; by SRC (Tyr-74). The tract at residues Pro-85 to Thr-198 is disordered. Tyr-88 is subject to Phosphotyrosine; by ABL, LYN and SRC. Tyr-89 is subject to Phosphotyrosine. Positions Gln-104–Tyr-124 are enriched in polar residues. The Nuclear localization signal motif lies at Lys-153 to Arg-169. Thr-170 is subject to Phosphothreonine. Polar residues predominate over residues Ser-175–Gln-186. Position 187 is a phosphothreonine; by PKB/AKT1, CDK1 and CDK2 (Thr-187). Thr-198 is subject to Phosphothreonine; by CaMK1, PKB/AKT1, RPS6KA1, RPS6KA3 and PIM1.

The protein belongs to the CDI family. Forms a ternary complex composed of CCNE1, CDK2 and CDKN1B. Interacts directly with CCNE1; the interaction is inhibited by CDK2-dependent phosphorylation on Thr-187. Interacts with COPS5, subunit of the COP9 signalosome complex; the interaction leads to CDKN1B degradation. Interacts with NUP50; the interaction leads to nuclear import and degradation of phosphorylated CDKN1B. Interacts with CCND1 and SNX6. Interacts (Thr-198-phosphorylated form) with 14-3-3 proteins, binds strongly YWHAQ, weakly YWHAE and YWHAH, but not YWHAB nor YWHAZ; the interaction with YWHAQ results in translocation to the cytoplasm. Interacts with AKT1 and LYN; the interactions lead to cytoplasmic mislocation, phosphorylation of CDKN1B and inhibition of cell cycle arrest. Forms a ternary complex with CCNA2 and CDK2; CDKN1B inhibits the kinase activity of CDK2 through conformational rearrangements. Interacts (unphosphorylated form) with CDK2. Forms a complex with CDK2 and SPDYA, but does not directly interact with SPDYA. Forms a ternary complex composed of cyclin D, CDK4 and CDKN1B. Interacts (phosphorylated on Tyr-88 and Tyr-89) with CDK4; the interaction is required for cyclin D and CDK4 complex assembly, induces nuclear translocation and activates the CDK4 kinase activity. Interacts with GRB2. Interacts with PIM1. Identified in a complex with SKP1, SKP2 and CKS1B. Interacts with UHMK1; the interaction leads to cytoplasmic mislocation, phosphorylation of CDKN1B and inhibition of cell cycle arrest. Also interacts with CDK1. Dephosphorylated on Thr-187 by PPM1H, leading to CDKN1B stability. In terms of processing, phosphorylated; phosphorylation occurs on serine, threonine and tyrosine residues. Phosphorylation on Ser-10 is the major site of phosphorylation in resting cells, takes place at the G(0)-G(1) phase and leads to protein stability. Phosphorylation on other sites is greatly enhanced by mitogens, growth factors, cMYC and in certain cancer cell lines. The phosphorylated form found in the cytoplasm is inactivate. Phosphorylation on Thr-198 is required for interaction with 14-3-3 proteins. Phosphorylation on Thr-187, by CDK1 and CDK2 leads to protein ubiquitination and proteasomal degradation. Tyrosine phosphorylation promotes this process. Phosphorylation by PKB/AKT1 can be suppressed by LY294002, an inhibitor of the catalytic subunit of PI3K. Phosphorylation on Tyr-88 and Tyr-89 has no effect on binding CDK2, but is required for binding CDK4. Dephosphorylated on tyrosine residues by G-CSF. Dephosphorylated on Thr-187 by PPM1H, leading to CDKN1B stability. Ubiquitinated; in the cytoplasm by the KPC complex (composed of RNF123/KPC1 and UBAC1/KPC2) and, in the nucleus, by SCF(SKP2). The latter requires prior phosphorylation on Thr-187. Ubiquitinated; by a TRIM21-containing SCF(SKP2)-like complex; leads to its degradation. Post-translationally, subject to degradation in the lysosome. Interaction with SNX6 promotes lysosomal degradation.

The protein localises to the nucleus. The protein resides in the cytoplasm. It is found in the endosome. Functionally, important regulator of cell cycle progression. Inhibits the kinase activity of CDK2 bound to cyclin A, but has little inhibitory activity on CDK2 bound to SPDYA. Involved in G1 arrest. Potent inhibitor of cyclin E- and cyclin A-CDK2 complexes. Forms a complex with cyclin type D-CDK4 complexes and is involved in the assembly, stability, and modulation of CCND1-CDK4 complex activation. Acts either as an inhibitor or an activator of cyclin type D-CDK4 complexes depending on its phosphorylation state and/or stoichometry. This Cricetulus griseus (Chinese hamster) protein is Cyclin-dependent kinase inhibitor 1B (CDKN1B).